Reading from the N-terminus, the 278-residue chain is Potassium/proton antiporter CemA (278 aa).

4 helical membrane-spanning segments follow: residues 61 to 81 (ILLL…FVFG), 155 to 175 (AVKN…LMIT), 203 to 223 (IILF…EVII), and 238 to 258 (FIFL…KYWI).

The protein belongs to the CemA family.

Its subcellular location is the plastid. The protein resides in the chloroplast inner membrane. The enzyme catalyses K(+)(in) + H(+)(out) = K(+)(out) + H(+)(in). Functionally, contributes to K(+)/H(+) antiport activity by supporting proton efflux to control proton extrusion and homeostasis in chloroplasts in a light-dependent manner to modulate photosynthesis. Prevents excessive induction of non-photochemical quenching (NPQ) under continuous-light conditions. Indirectly promotes efficient inorganic carbon uptake into chloroplasts. This is Potassium/proton antiporter CemA from Pyropia yezoensis (Susabi-nori).